We begin with the raw amino-acid sequence, 218 residues long: Cytidylate kinase (218 aa).

11–19 (GPGASGKGT) provides a ligand contact to ATP.

It belongs to the cytidylate kinase family. Type 1 subfamily.

It is found in the cytoplasm. It catalyses the reaction CMP + ATP = CDP + ADP. The enzyme catalyses dCMP + ATP = dCDP + ADP. This is Cytidylate kinase from Neisseria gonorrhoeae (strain ATCC 700825 / FA 1090).